We begin with the raw amino-acid sequence, 283 residues long: Tetraspanin-33 (283 aa).

The Cytoplasmic segment spans residues 1 to 24 (MARRPRAPAASGEEFSFVSPLVKY). Residues 25 to 45 (LLFFFNMLFWVISMVMVAVGV) traverse the membrane as a helical segment. Over 46–64 (YARLMKHAEAALACLAVDP) the chain is Extracellular. Residues 65 to 85 (AILLIVVGVLMFLLTFCGCIG) form a helical membrane-spanning segment. Residues 86–96 (SLRENICLLQT) are Cytoplasmic-facing. A helical membrane pass occupies residues 97–117 (FSLCLTAVFLLQLAAGILGFV). Residues 118–235 (FSDKARGKVS…DKLVNWIHSN (118 aa)) are Extracellular-facing. Cystine bridges form between cysteine 156–cysteine 224, cysteine 157–cysteine 189, cysteine 173–cysteine 183, and cysteine 190–cysteine 203. Residue asparagine 172 is glycosylated (N-linked (GlcNAc...) asparagine). The helical transmembrane segment at 236 to 256 (LFLLGGVALGLAIPQLVGILL) threads the bilayer. Residues 257 to 283 (SQILVNQIKDQIKLQLYNQQHRADPWY) are Cytoplasmic-facing.

Belongs to the tetraspanin (TM4SF) family. Homodimer; disulfide-linked. Interacts (via extracellular domain) with ADAM10 (via extracellular domain). Interacts (via cytoplasmic domain) with PLEKHA7 (via WW domains); the interaction is dependent on PDZD11 being bound to PLEKHA7 and facilitates the docking of ADAM10 to zonula adherens. As to expression, predominantly expressed in erythroblasts.

The protein resides in the cell membrane. It localises to the cell junction. The protein localises to the adherens junction. It is found in the cytoplasm. In terms of biological role, part of TspanC8 subgroup, composed of 6 members that interact with the transmembrane metalloprotease ADAM10. This interaction is required for ADAM10 exit from the endoplasmic reticulum and for enzymatic maturation and trafficking to the cell surface as well as substrate specificity. Different TspanC8/ADAM10 complexes have distinct substrates. Plays an important role in normal erythropoiesis. It has a role in the differentiation of erythroid progenitors. Negatively regulates ligand-induced Notch activity probably by regulating ADAM10 activity. Mediates docking of ADAM10 to zonula adherens by interacting with ADAM10 and, in a PDZD11-dependent manner, with the zonula adherens protein PLEKHA7. This Homo sapiens (Human) protein is Tetraspanin-33.